We begin with the raw amino-acid sequence, 198 residues long: ATP-dependent Clp protease proteolytic subunit (198 aa).

Ser-98 serves as the catalytic Nucleophile. Residue His-123 is part of the active site.

This sequence belongs to the peptidase S14 family. Fourteen ClpP subunits assemble into 2 heptameric rings which stack back to back to give a disk-like structure with a central cavity, resembling the structure of eukaryotic proteasomes.

It localises to the cytoplasm. The catalysed reaction is Hydrolysis of proteins to small peptides in the presence of ATP and magnesium. alpha-casein is the usual test substrate. In the absence of ATP, only oligopeptides shorter than five residues are hydrolyzed (such as succinyl-Leu-Tyr-|-NHMec, and Leu-Tyr-Leu-|-Tyr-Trp, in which cleavage of the -Tyr-|-Leu- and -Tyr-|-Trp bonds also occurs).. Its function is as follows. Cleaves peptides in various proteins in a process that requires ATP hydrolysis. Has a chymotrypsin-like activity. Plays a major role in the degradation of misfolded proteins. The polypeptide is ATP-dependent Clp protease proteolytic subunit (Levilactobacillus brevis (strain ATCC 367 / BCRC 12310 / CIP 105137 / JCM 1170 / LMG 11437 / NCIMB 947 / NCTC 947) (Lactobacillus brevis)).